We begin with the raw amino-acid sequence, 471 residues long: Reticulon-2 (471 aa).

Disordered stretches follow at residues 1–137 (MGQV…ERPL), 153–181 (SAGSGEDSATSSSTPLENEEPDGLEASEA), and 205–234 (QLSPSSGTPQAHTPSPQRSQDSNSGPDDEP). The span at 14 to 25 (APSTASSTPDST) shows a compositional bias: low complexity. Basic and acidic residues predominate over residues 32 to 43 (SDFRELHTAREF). Residue serine 44 is modified to Phosphoserine. Composition is skewed to polar residues over residues 100-118 (PQQSGLGDSLESIPSLSQS) and 159-168 (DSATSSSTPL). Positions 169–181 (ENEEPDGLEASEA) are enriched in acidic residues. The span at 205-229 (QLSPSSGTPQAHTPSPQRSQDSNSG) shows a compositional bias: polar residues. Phosphoserine is present on residues serine 226 and serine 228. The Reticulon domain maps to 272–471 (VADLLYWKDT…SVSGSKAKAE (200 aa)). 2 helical membrane-spanning segments follow: residues 295-315 (LLCLLHFSIVSVAAHLALLGL) and 390-410 (LLFYILTFVGAIFNGLTLVIL).

Interacts with SPAST. Interacts with BACE1. Interacts (via first transmembrane domain) with ARL6IP5/GTRAP3-18. Interacts (via N-terminus) with SLC1A1/EAAC1; the interaction promotes cell surface expression of SLC1A1. Detected in skeletal and cardiac muscle (at protein level). Expressed predominantly in neural and muscular tissues.

It localises to the endoplasmic reticulum membrane. The protein localises to the sarcoplasmic reticulum membrane. The protein resides in the cell membrane. Its subcellular location is the sarcolemma. It is found in the T-tubule. It localises to the cytoplasm. The protein localises to the myofibril. The protein resides in the sarcomere. Its subcellular location is the z line. It is found in the cytoskeleton. In terms of biological role, inhibits amyloid precursor protein processing, probably by blocking BACE1 activity. Enhances trafficking of the glutamate transporter SLC1A1/EAAC1 from the endoplasmic reticulum to the cell surface. Plays a role in the translocation of SLC2A4/GLUT4 from intracellular membranes to the cell membrane which facilitates the uptake of glucose into the cell. This is Reticulon-2 from Mus musculus (Mouse).